The chain runs to 399 residues: Cell division protein FtsZ (399 aa).

GTP-binding positions include 18–22, 105–107, glutamate 136, arginine 140, and aspartate 184; these read GGGVN and GTG. Positions 311–399 are disordered; it reads GFDGGQPPSK…EELDVPDFLK (89 aa). Residues 388–399 are compositionally biased toward acidic residues; that stretch reads AAEELDVPDFLK.

It belongs to the FtsZ family. Homodimer. Polymerizes to form a dynamic ring structure in a strictly GTP-dependent manner. Interacts directly with several other division proteins.

It localises to the cytoplasm. In terms of biological role, essential cell division protein that forms a contractile ring structure (Z ring) at the future cell division site. The regulation of the ring assembly controls the timing and the location of cell division. One of the functions of the FtsZ ring is to recruit other cell division proteins to the septum to produce a new cell wall between the dividing cells. Binds GTP and shows GTPase activity. The polypeptide is Cell division protein FtsZ (Streptomyces coelicolor (strain ATCC BAA-471 / A3(2) / M145)).